A 315-amino-acid polypeptide reads, in one-letter code: Small ribosomal subunit protein uS9m (315 aa).

Residues 1 to 42 (MMASLRHSITSALRSSRQGCSKSAQWQSLDQQFGALRISSRS) constitute a mitochondrion transit peptide. The segment at 293–315 (PRKVERKKHGHVKARKMPTWVKR) is disordered. Residues 296–315 (VERKKHGHVKARKMPTWVKR) are compositionally biased toward basic residues.

The protein belongs to the universal ribosomal protein uS9 family. As to quaternary structure, component of the mitochondrial small ribosomal subunit (mt-SSU). Mature N.crassa 74S mitochondrial ribosomes consist of a small (37S) and a large (54S) subunit. The 37S small subunit contains a 16S ribosomal RNA (16S mt-rRNA) and 32 different proteins. The 54S large subunit contains a 23S rRNA (23S mt-rRNA) and 42 different proteins.

The protein localises to the mitochondrion. Component of the mitochondrial ribosome (mitoribosome), a dedicated translation machinery responsible for the synthesis of mitochondrial genome-encoded proteins, including at least some of the essential transmembrane subunits of the mitochondrial respiratory chain. The mitoribosomes are attached to the mitochondrial inner membrane and translation products are cotranslationally integrated into the membrane. The protein is Small ribosomal subunit protein uS9m (mrp-9) of Neurospora crassa (strain ATCC 24698 / 74-OR23-1A / CBS 708.71 / DSM 1257 / FGSC 987).